We begin with the raw amino-acid sequence, 267 residues long: MSRIATTFANLAKQNEKALVTFITAGDPDLETTEKLILELEKSGADLIELGVPFSDPMADGPTIQLSSERALCAGTTLPKILTLVKSVRQQTEIPLILMGYYNPVFLYGIERFVADAVSAGVDGVLLVDLPPEEAEEFKAAADREGLDVIFLLTPTSDEARIRKVANLGSGFIYYVSVTGVTGARTSVADTVFPDVKKIREHVTLPLVVGFGISDPVQAGRVAAVADGVVVGSALVKLFEEFRGDELRERLGGFVAALKAGVKAVGG.

Active-site proton acceptor residues include E49 and D60.

It belongs to the TrpA family. In terms of assembly, tetramer of two alpha and two beta chains.

The enzyme catalyses (1S,2R)-1-C-(indol-3-yl)glycerol 3-phosphate + L-serine = D-glyceraldehyde 3-phosphate + L-tryptophan + H2O. The protein operates within amino-acid biosynthesis; L-tryptophan biosynthesis; L-tryptophan from chorismate: step 5/5. Functionally, the alpha subunit is responsible for the aldol cleavage of indoleglycerol phosphate to indole and glyceraldehyde 3-phosphate. In Geotalea uraniireducens (strain Rf4) (Geobacter uraniireducens), this protein is Tryptophan synthase alpha chain.